Reading from the N-terminus, the 350-residue chain is S-adenosylmethionine:tRNA ribosyltransferase-isomerase (350 aa).

The protein belongs to the QueA family. As to quaternary structure, monomer.

The protein resides in the cytoplasm. It carries out the reaction 7-aminomethyl-7-carbaguanosine(34) in tRNA + S-adenosyl-L-methionine = epoxyqueuosine(34) in tRNA + adenine + L-methionine + 2 H(+). Its pathway is tRNA modification; tRNA-queuosine biosynthesis. Transfers and isomerizes the ribose moiety from AdoMet to the 7-aminomethyl group of 7-deazaguanine (preQ1-tRNA) to give epoxyqueuosine (oQ-tRNA). The protein is S-adenosylmethionine:tRNA ribosyltransferase-isomerase of Parvibaculum lavamentivorans (strain DS-1 / DSM 13023 / NCIMB 13966).